Reading from the N-terminus, the 510-residue chain is Catalase (510 aa).

Residues 1-26 (MPLLNWSRHMVCLTAAGLITVPTVYA) form the signal peptide. Active-site residues include H78 and N150. Y358 is a binding site for heme. Positions 386-400 (NQDGALNTGHTTSGV) are enriched in polar residues. Residues 386-412 (NQDGALNTGHTTSGVNYEPSRLEPRPA) form a disordered region.

Belongs to the catalase family. Requires heme as cofactor.

It is found in the periplasm. The catalysed reaction is 2 H2O2 = O2 + 2 H2O. Decomposes hydrogen peroxide into water and oxygen; serves to protect cells from the toxic effects of hydrogen peroxide. This chain is Catalase (katB), found in Pseudomonas syringae pv. syringae.